We begin with the raw amino-acid sequence, 66 residues long: Large ribosomal subunit protein bL33c (66 aa).

This sequence belongs to the bacterial ribosomal protein bL33 family.

It is found in the plastid. The protein localises to the chloroplast. This chain is Large ribosomal subunit protein bL33c (rpl33), found in Arabidopsis thaliana (Mouse-ear cress).